Consider the following 436-residue polypeptide: Serine--tRNA ligase (436 aa).

An L-serine-binding site is contributed by 239-241 (TAE). 270–272 (RKE) serves as a coordination point for ATP. Glu-293 serves as a coordination point for L-serine. 357-360 (EISS) contacts ATP. Ser-392 serves as a coordination point for L-serine.

It belongs to the class-II aminoacyl-tRNA synthetase family. Type-1 seryl-tRNA synthetase subfamily. In terms of assembly, homodimer. The tRNA molecule binds across the dimer.

It localises to the cytoplasm. It carries out the reaction tRNA(Ser) + L-serine + ATP = L-seryl-tRNA(Ser) + AMP + diphosphate + H(+). It catalyses the reaction tRNA(Sec) + L-serine + ATP = L-seryl-tRNA(Sec) + AMP + diphosphate + H(+). It participates in aminoacyl-tRNA biosynthesis; selenocysteinyl-tRNA(Sec) biosynthesis; L-seryl-tRNA(Sec) from L-serine and tRNA(Sec): step 1/1. Functionally, catalyzes the attachment of serine to tRNA(Ser). Is also able to aminoacylate tRNA(Sec) with serine, to form the misacylated tRNA L-seryl-tRNA(Sec), which will be further converted into selenocysteinyl-tRNA(Sec). The sequence is that of Serine--tRNA ligase from Leuconostoc citreum (strain KM20).